The chain runs to 175 residues: Deoxyuridine 5'-triphosphate nucleotidohydrolase (175 aa).

Substrate contacts are provided by residues 67–69 (RSG), Asn-80, 84–86 (TVD), and Lys-94. The segment at 138 to 175 (RAEGGFGSTGGHAAVGADTNGQQGGNRYASVVSDRKGQ) is disordered.

Belongs to the dUTPase family. The cofactor is Mg(2+).

It carries out the reaction dUTP + H2O = dUMP + diphosphate + H(+). The protein operates within pyrimidine metabolism; dUMP biosynthesis; dUMP from dCTP (dUTP route): step 2/2. This enzyme is involved in nucleotide metabolism: it produces dUMP, the immediate precursor of thymidine nucleotides and it decreases the intracellular concentration of dUTP so that uracil cannot be incorporated into DNA. The sequence is that of Deoxyuridine 5'-triphosphate nucleotidohydrolase from Streptomyces avermitilis (strain ATCC 31267 / DSM 46492 / JCM 5070 / NBRC 14893 / NCIMB 12804 / NRRL 8165 / MA-4680).